A 368-amino-acid polypeptide reads, in one-letter code: Methionine import ATP-binding protein MetN (368 aa).

The 256-residue stretch at 5–260 folds into the ABC transporter domain; that stretch reads IELNNLSVQF…PKEALTKQFI (256 aa). 41-48 serves as a coordination point for ATP; it reads GYSGAGKS.

The protein belongs to the ABC transporter superfamily. Methionine importer (TC 3.A.1.24) family. In terms of assembly, the complex is composed of two ATP-binding proteins (MetN), two transmembrane proteins (MetI) and a solute-binding protein (MetQ).

Its subcellular location is the cell membrane. The catalysed reaction is L-methionine(out) + ATP + H2O = L-methionine(in) + ADP + phosphate + H(+). It carries out the reaction D-methionine(out) + ATP + H2O = D-methionine(in) + ADP + phosphate + H(+). Its function is as follows. Part of the ABC transporter complex MetNIQ involved in methionine import. Responsible for energy coupling to the transport system. In Lactococcus lactis subsp. cremoris (strain MG1363), this protein is Methionine import ATP-binding protein MetN.